Reading from the N-terminus, the 461-residue chain is Methylthioribose transporter (461 aa).

12 helical membrane-spanning segments follow: residues 33–53 (LLGI…TVAA), 56–76 (AGPA…LAAF), 102–122 (LLAF…LSAV), 152–172 (MAGA…TAIV), 185–205 (VIVL…IGYV), 213–233 (FMPF…FAYL), 254–274 (VGII…SLVL), 301–321 (VAGI…LALL), 355–375 (TWLT…GTLA), 376–396 (HLVN…VIVL), 409–429 (VPFV…FMYS), and 432–452 (GVTW…YFLY).

This sequence belongs to the amino acid-polyamine-organocation (APC) superfamily.

It localises to the cell membrane. Functionally, involved in import of methylthioribose (MTR) into the cell. The sequence is that of Methylthioribose transporter from Bacillus subtilis (strain 168).